A 233-amino-acid chain; its full sequence is Probable GTP-binding protein EngB (233 aa).

One can recognise an EngB-type G domain in the interval 31–205; that stretch reads TGVEIAFAGR…RRKLDTWFGP (175 aa). Residues 39-46, 66-70, 84-87, 151-154, and 184-186 contribute to the GTP site; these read GRSNAGKS, GRTQL, DLPG, TKAD, and FSS. 2 residues coordinate Mg(2+): Ser46 and Thr68.

It belongs to the TRAFAC class TrmE-Era-EngA-EngB-Septin-like GTPase superfamily. EngB GTPase family. Mg(2+) serves as cofactor.

Functionally, necessary for normal cell division and for the maintenance of normal septation. The protein is Probable GTP-binding protein EngB of Photobacterium profundum (strain SS9).